We begin with the raw amino-acid sequence, 164 residues long: Flavodoxin (164 aa).

A Flavodoxin-like domain is found at 4–160 (IGIFFGTDSG…RISKWVEQVK (157 aa)).

It belongs to the flavodoxin family. It depends on FMN as a cofactor.

Its function is as follows. Low-potential electron donor to a number of redox enzymes. This is Flavodoxin (fldA) from Helicobacter pylori (strain ATCC 700392 / 26695) (Campylobacter pylori).